Here is a 75-residue protein sequence, read N- to C-terminus: Small ribosomal subunit protein bS18 (75 aa).

The protein belongs to the bacterial ribosomal protein bS18 family. In terms of assembly, part of the 30S ribosomal subunit. Forms a tight heterodimer with protein bS6.

Functionally, binds as a heterodimer with protein bS6 to the central domain of the 16S rRNA, where it helps stabilize the platform of the 30S subunit. In Buchnera aphidicola subsp. Acyrthosiphon pisum (strain 5A), this protein is Small ribosomal subunit protein bS18.